Consider the following 285-residue polypeptide: MSRNFSMRAKVYLKPLVFFQIIDAYDRRPKGDNQVMGTLLGRNKEGHIEITNCFTVPHKEHSENKRIDLDMAYASEVLELNMFAYPNERVLGWFCTGKSVSRSASLIHDYYVRECCEGQPLHLLVDAALKNQRLSTRLYCAVEMGVPGGTKGLMFSLVPLEISNENSDLVALRCIEKQSQQQASKQMERFVPELAQVVDATRDMQHRLDLVLRYINDVLARKKKPDNVVGRSLYAALTAVPLLDSDKFRVMFNTNLRDMLMAITLSTMIKTQLEISEKLSCMQDQ.

Positions 11–145 constitute an MPN domain; the sequence is VYLKPLVFFQ…TRLYCAVEMG (135 aa).

This sequence belongs to the eIF-3 subunit F family. In terms of assembly, component of the eukaryotic translation initiation factor 3 (eIF-3) complex. The eIF-3 complex interacts with pix.

It localises to the cytoplasm. Functionally, component of the eukaryotic translation initiation factor 3 (eIF-3) complex, which is involved in protein synthesis of a specialized repertoire of mRNAs and, together with other initiation factors, stimulates binding of mRNA and methionyl-tRNAi to the 40S ribosome. The eIF-3 complex specifically targets and initiates translation of a subset of mRNAs involved in cell proliferation. This chain is Eukaryotic translation initiation factor 3 subunit F-2, found in Drosophila melanogaster (Fruit fly).